Here is a 299-residue protein sequence, read N- to C-terminus: Delta-9 desaturase-like 2 protein (299 aa).

The helical transmembrane segment at 55-75 threads the bilayer; the sequence is WEAFRFGIILAILTNLCITFS. The Histidine box-1 signature appears at 77-82; the sequence is HRNLTH. A Histidine box-2 motif is present at residues 114–118; the sequence is HRFHH. The chain crosses the membrane as a helical span at residues 174–194; that stretch reads LVLHILAFWTLIYLWGGLPYL. Positions 246–250 match the Histidine box-3 motif; that stretch reads HNNHH. Residues 262–282 traverse the membrane as a helical segment; sequence WYQLDITWYLIWFFQALGLAT.

This sequence belongs to the fatty acid desaturase type 1 family. It depends on Fe cation as a cofactor.

Its subcellular location is the endoplasmic reticulum membrane. Its pathway is lipid metabolism; polyunsaturated fatty acid biosynthesis. In Arabidopsis thaliana (Mouse-ear cress), this protein is Delta-9 desaturase-like 2 protein.